We begin with the raw amino-acid sequence, 374 residues long: MTTNLLDFDLDGLAAFCERLGEKRFRATQLFRWIHQRGASDFDQMSDLAKSLREKLRGCAHVAGLQAISEHVSADGTVKWLFDVGDGNAVETVFIPEDDRGTLCISSQAGCAVGCRFCSTGHQGFSRNLTTGEILAQLWYAEHALRQRRGDGERVISNVVMMGMGEPLQNYAALVPALRVMLDDHGYGLSRRRVTVSTSGVVPMMDRLAQDCPVALAVSLHAPNDVLRDNLVPLNRKYPLHELLAACRRYLDHAPRDFITFEYCMLEGVNDQPEHARQLIDLVGRKAADGGVSCKFNLIPFNPFPASGLRRSPPAAVTAFAQLLSDAGIVTTVRKTRGDDIDAACGQLAGDVKDRTRVNERMAKLRTIEIKPVI.

The active-site Proton acceptor is the Glu-91. The Radical SAM core domain maps to 97–340 (EDDRGTLCIS…TTVRKTRGDD (244 aa)). A disulfide bond links Cys-104 and Cys-345. Residues Cys-111, Cys-115, and Cys-118 each coordinate [4Fe-4S] cluster. S-adenosyl-L-methionine is bound by residues 165-166 (GE), Ser-197, 219-221 (SLH), and Asn-302. Residue Cys-345 is the S-methylcysteine intermediate of the active site.

Belongs to the radical SAM superfamily. RlmN family. It depends on [4Fe-4S] cluster as a cofactor.

It is found in the cytoplasm. The catalysed reaction is adenosine(2503) in 23S rRNA + 2 reduced [2Fe-2S]-[ferredoxin] + 2 S-adenosyl-L-methionine = 2-methyladenosine(2503) in 23S rRNA + 5'-deoxyadenosine + L-methionine + 2 oxidized [2Fe-2S]-[ferredoxin] + S-adenosyl-L-homocysteine. It carries out the reaction adenosine(37) in tRNA + 2 reduced [2Fe-2S]-[ferredoxin] + 2 S-adenosyl-L-methionine = 2-methyladenosine(37) in tRNA + 5'-deoxyadenosine + L-methionine + 2 oxidized [2Fe-2S]-[ferredoxin] + S-adenosyl-L-homocysteine. Its function is as follows. Specifically methylates position 2 of adenine 2503 in 23S rRNA and position 2 of adenine 37 in tRNAs. m2A2503 modification seems to play a crucial role in the proofreading step occurring at the peptidyl transferase center and thus would serve to optimize ribosomal fidelity. This chain is Dual-specificity RNA methyltransferase RlmN, found in Acidovorax sp. (strain JS42).